Here is a 137-residue protein sequence, read N- to C-terminus: uncharacterized protein (137 aa).

Transmembrane regions (helical) follow at residues Glu-5–Ile-25, Ile-79–Tyr-99, and Phe-109–Trp-129.

It belongs to the MAPEG family.

It localises to the cell membrane. This is an uncharacterized protein from Synechocystis sp. (strain ATCC 27184 / PCC 6803 / Kazusa).